The sequence spans 379 residues: Protein trichome birefringence-like 36 (379 aa).

The helical; Signal-anchor for type II membrane protein transmembrane segment at 8–24 (VLFLSLCLILGKVVLSQ) threads the bilayer. The GDS motif motif lies at 123–125 (GDS). Positions 353–367 (DCSHWCLPGVPDIWN) match the DCXHWCLPGXXDXWN motif motif.

The protein belongs to the PC-esterase family. TBL subfamily.

The protein resides in the membrane. Its function is as follows. May act as a bridging protein that binds pectin and other cell wall polysaccharides. Probably involved in maintaining esterification of pectins. May be involved in the specific O-acetylation of cell wall polymers. This Arabidopsis thaliana (Mouse-ear cress) protein is Protein trichome birefringence-like 36 (TBL36).